A 234-amino-acid polypeptide reads, in one-letter code: Carboxy-S-adenosyl-L-methionine synthase (234 aa).

S-adenosyl-L-methionine-binding positions include tyrosine 35, 60-62 (GCS), 109-110 (DI), asparagine 124, and arginine 191.

It belongs to the class I-like SAM-binding methyltransferase superfamily. Cx-SAM synthase family. As to quaternary structure, homodimer.

The enzyme catalyses prephenate + S-adenosyl-L-methionine = carboxy-S-adenosyl-L-methionine + 3-phenylpyruvate + H2O. Its function is as follows. Catalyzes the conversion of S-adenosyl-L-methionine (SAM) to carboxy-S-adenosyl-L-methionine (Cx-SAM). The sequence is that of Carboxy-S-adenosyl-L-methionine synthase from Campylobacter fetus subsp. fetus (strain 82-40).